The primary structure comprises 403 residues: Flavohemoprotein (403 aa).

Positions M1 to S138 constitute a Globin domain. H85 lines the heme b pocket. Active-site charge relay system residues include Y95 and E137. The segment at G149–E403 is reductase. Residues A152–D262 enclose the FAD-binding FR-type domain. Residues Y190 and R206–S209 contribute to the FAD site. NADP(+) is bound at residue G275–P280. FAD is bound at residue V395–P398.

The protein belongs to the globin family. Two-domain flavohemoproteins subfamily. It in the C-terminal section; belongs to the flavoprotein pyridine nucleotide cytochrome reductase family. Heme b is required as a cofactor. Requires FAD as cofactor.

The catalysed reaction is 2 nitric oxide + NADPH + 2 O2 = 2 nitrate + NADP(+) + H(+). The enzyme catalyses 2 nitric oxide + NADH + 2 O2 = 2 nitrate + NAD(+) + H(+). Functionally, is involved in NO detoxification in an aerobic process, termed nitric oxide dioxygenase (NOD) reaction that utilizes O(2) and NAD(P)H to convert NO to nitrate, which protects the bacterium from various noxious nitrogen compounds. Therefore, plays a central role in the inducible response to nitrosative stress. This is Flavohemoprotein from Rhizobium meliloti (strain 1021) (Ensifer meliloti).